Consider the following 126-residue polypeptide: Protein ApaG (126 aa).

The ApaG domain occupies 2-126 (SALDTSIRVE…FRLTTPGLLH (125 aa)).

The protein is Protein ApaG of Shewanella baltica (strain OS195).